Here is a 310-residue protein sequence, read N- to C-terminus: Nodulation protein D 1 (310 aa).

An HTH lysR-type domain is found at 6–63 (LDLNLLVALDALMTERQLTAAARRINLSQPAMSAAIARLRNYFHDDLFVMQGRELILT). A DNA-binding region (H-T-H motif) is located at residues 23–42 (LTAAARRINLSQPAMSAAIA).

This sequence belongs to the LysR transcriptional regulatory family.

In terms of biological role, nodD regulates the expression of the nodABCFE genes which encode other nodulation proteins. NodD is also a negative regulator of its own expression. Binds flavonoids as inducers. The protein is Nodulation protein D 1 (nodD1) of Neorhizobium galegae (Rhizobium galegae).